A 473-amino-acid chain; its full sequence is Cysteine--tRNA ligase (473 aa).

Cys-28 lines the Zn(2+) pocket. The 'HIGH' region signature appears at 30–40 (MTVYDFCHIGH). Cys-212, His-237, and Glu-241 together coordinate Zn(2+). The 'KMSKS' region motif lies at 277-281 (KMSKS). ATP is bound at residue Lys-280.

The protein belongs to the class-I aminoacyl-tRNA synthetase family. In terms of assembly, monomer. Zn(2+) serves as cofactor.

Its subcellular location is the cytoplasm. It carries out the reaction tRNA(Cys) + L-cysteine + ATP = L-cysteinyl-tRNA(Cys) + AMP + diphosphate. In Polynucleobacter necessarius subsp. necessarius (strain STIR1), this protein is Cysteine--tRNA ligase.